Here is a 646-residue protein sequence, read N- to C-terminus: Phosphomethylpyrimidine synthase (646 aa).

Positions 1–13 (MNIRSNPDTTRPA) are enriched in polar residues. The segment at 1 to 30 (MNIRSNPDTTRPAVTTGALPSSRKMFSAPD) is disordered. Substrate-binding positions include Asn221, Met250, Tyr279, His315, 335–337 (SRG), 376–379 (DGLR), and Glu415. Residue His419 participates in Zn(2+) binding. Residue Tyr442 coordinates substrate. His483 contacts Zn(2+). [4Fe-4S] cluster contacts are provided by Cys563, Cys566, and Cys571.

It belongs to the ThiC family. In terms of assembly, homodimer. [4Fe-4S] cluster is required as a cofactor.

The enzyme catalyses 5-amino-1-(5-phospho-beta-D-ribosyl)imidazole + S-adenosyl-L-methionine = 4-amino-2-methyl-5-(phosphooxymethyl)pyrimidine + CO + 5'-deoxyadenosine + formate + L-methionine + 3 H(+). The protein operates within cofactor biosynthesis; thiamine diphosphate biosynthesis. In terms of biological role, catalyzes the synthesis of the hydroxymethylpyrimidine phosphate (HMP-P) moiety of thiamine from aminoimidazole ribotide (AIR) in a radical S-adenosyl-L-methionine (SAM)-dependent reaction. The chain is Phosphomethylpyrimidine synthase from Nitrobacter winogradskyi (strain ATCC 25391 / DSM 10237 / CIP 104748 / NCIMB 11846 / Nb-255).